A 766-amino-acid chain; its full sequence is MVANSTGRDASALKSRKRAADSESEPLLKQGQPFPKQPRIGSELDKTRWRLKDDDSRHTWHYLEDDDAAKEWPQSYAEKWYLNQSLDLPDLPSPDSPLAAATNGLDFFEKLQLPSGHWGCEYGGPMFLLPSVVITWYVTRTPISPSKATAIYNYISARAHPEDGGWGLHIEGESSVFGTLMNYVALRLVGVEADDPVLVKARGTLHKMGGALYAPHWAKFWMGVLGVMDWDVVNPVPPEIWLLPDWVPFAPWRWWIHIRMVFLPMGWLYSKRWSCEETDVIRSLRKEVFIEDYAKIKWTSHRNDIGVVDNYHPKSWLLNTANWLIVNIWNPYLRPNVLKEKAEAWSSKQVDMEDANTDYACLAPVNATMNTVMCYARDGPDNYGVQRHIERLEEFLWVKDEGMLVNGTNGVQCWDTAFLIQAVFEAGLHKDEKWKPMLMKSLQYLERQQIREDCVDQDVCYRQPRKGGWPFSNKDQGYGVSDCISEAMKAIILLQKVGGLPEVLEERRLFDAVDTLLLYQNSNGGMSSYEKRRGGEWLEMLNAAEVFGRIMIEYDYPECTTACVTALSLFNKYWPDYRTKEVKTLIRTAAEWIKSNQRPDGGWYGSWGICFTYAGMFALESMKHIGQTYATGENSRRGCDFLISKQRADGGWSESYKACETMEYVEHPSGSLVVQTAWALIGLMEADYPHVEPLKRGIQLIMDRQQPNGEWLQEAIEGVFNKSCMISYPNYKFTFTIKALGMFAKRFPEEKLVPSWALQGNGIEKS.

Residues 1–47 (MVANSTGRDASALKSRKRAADSESEPLLKQGQPFPKQPRIGSELDKT) form a disordered region. The PFTB 1 repeat unit spans residues 148–190 (ATAIYNYISARAHPEDGGWGLHIEGESSVFGTLMNYVALRLVG). Residue Asp482 is the Proton donor of the active site. 2 PFTB repeats span residues 586–626 (IRTA…KHIG) and 635–676 (SRRG…VVQT).

Belongs to the terpene cyclase/mutase family.

Its subcellular location is the lipid droplet. It is found in the endoplasmic reticulum membrane. It carries out the reaction (S)-2,3-epoxysqualene = lanosterol. It participates in terpene metabolism; lanosterol biosynthesis; lanosterol from farnesyl diphosphate: step 3/3. The protein operates within steroid metabolism; ergosterol biosynthesis. In terms of biological role, lanosterol synthase; part of the third module of ergosterol biosynthesis pathway that includes the late steps of the pathway. ERG7 catalyzes the cyclization of (S)-2,3 oxidosqualene to lanosterol, a reaction that forms the sterol core. The third module or late pathway involves the ergosterol synthesis itself through consecutive reactions that mainly occur in the endoplasmic reticulum (ER) membrane. Firstly, the squalene synthase ERG9 catalyzes the condensation of 2 farnesyl pyrophosphate moieties to form squalene, which is the precursor of all steroids. Squalene synthase is crucial for balancing the incorporation of farnesyl diphosphate (FPP) into sterol and nonsterol isoprene synthesis. Secondly, squalene is converted into lanosterol by the consecutive action of the squalene epoxidase ERG1 and the lanosterol synthase ERG7. Then, the delta(24)-sterol C-methyltransferase ERG6 methylates lanosterol at C-24 to produce eburicol. Eburicol is the substrate of the sterol 14-alpha demethylase encoded by CYP51A, CYP51B and CYP51C, to yield 4,4,24-trimethyl ergosta-8,14,24(28)-trienol. CYP51B encodes the enzyme primarily responsible for sterol 14-alpha-demethylation, and plays an essential role in ascospore formation. CYP51A encodes an additional sterol 14-alpha-demethylase, induced on ergosterol depletion and responsible for the intrinsic variation in azole sensitivity. The third CYP51 isoform, CYP51C, does not encode a sterol 14-alpha-demethylase, but is required for full virulence on host wheat ears. The C-14 reductase ERG24 then reduces the C14=C15 double bond which leads to 4,4-dimethylfecosterol. A sequence of further demethylations at C-4, involving the C-4 demethylation complex containing the C-4 methylsterol oxidases ERG25, the sterol-4-alpha-carboxylate 3-dehydrogenase ERG26 and the 3-keto-steroid reductase ERG27, leads to the production of fecosterol via 4-methylfecosterol. ERG28 has a role as a scaffold to help anchor ERG25, ERG26 and ERG27 to the endoplasmic reticulum. The C-8 sterol isomerase ERG2 then catalyzes the reaction which results in unsaturation at C-7 in the B ring of sterols and thus converts fecosterol to episterol. The sterol-C5-desaturases ERG3A and ERG3BB then catalyze the introduction of a C-5 double bond in the B ring to produce 5-dehydroepisterol. The C-22 sterol desaturases ERG5A and ERG5B further convert 5-dehydroepisterol into ergosta-5,7,22,24(28)-tetraen-3beta-ol by forming the C-22(23) double bond in the sterol side chain. Finally, ergosta-5,7,22,24(28)-tetraen-3beta-ol is substrate of the C-24(28) sterol reductase ERG4 to produce ergosterol. The polypeptide is Lanosterol synthase ERG7 (Gibberella zeae (strain ATCC MYA-4620 / CBS 123657 / FGSC 9075 / NRRL 31084 / PH-1) (Wheat head blight fungus)).